A 102-amino-acid chain; its full sequence is NADH-quinone oxidoreductase subunit K (102 aa).

The next 3 helical transmembrane spans lie at 5–25 (LEHY…GIFL), 31–51 (IVIL…LVAF), and 66–86 (FVLT…VVFF).

Belongs to the complex I subunit 4L family. In terms of assembly, NDH-1 is composed of 14 different subunits. Subunits NuoA, H, J, K, L, M, N constitute the membrane sector of the complex.

Its subcellular location is the cell inner membrane. It carries out the reaction a quinone + NADH + 5 H(+)(in) = a quinol + NAD(+) + 4 H(+)(out). Functionally, NDH-1 shuttles electrons from NADH, via FMN and iron-sulfur (Fe-S) centers, to quinones in the respiratory chain. The immediate electron acceptor for the enzyme in this species is believed to be ubiquinone. Couples the redox reaction to proton translocation (for every two electrons transferred, four hydrogen ions are translocated across the cytoplasmic membrane), and thus conserves the redox energy in a proton gradient. The chain is NADH-quinone oxidoreductase subunit K from Parvibaculum lavamentivorans (strain DS-1 / DSM 13023 / NCIMB 13966).